An 833-amino-acid polypeptide reads, in one-letter code: Probable serine/threonine-protein kinase DDB_G0277165 (833 aa).

The Protein kinase domain occupies 9–262; sequence FIIGKTLGQG…IKEIKEHPWF (254 aa). ATP contacts are provided by residues 15–23 and K38; that span reads LGQGTTGKV. D133 serves as the catalytic Proton acceptor. The 42-residue stretch at 288-329 folds into the UBA domain; that stretch reads QIDEDIFRSLMALGVGTIDEVKQQLVSNQKSATLIYYRLLEE. Basic and acidic residues predominate over residues 338–351; it reads NKYGYKPKETRRNS. 3 disordered regions span residues 338–472, 528–626, and 764–799; these read NKYG…ISPS, QALQ…PIEI, and FINPVSPSKQHHHHHHQQQQPQQQQMPPLNLNGGQN. 2 stretches are compositionally biased toward low complexity: residues 365-432 and 441-459; these read NNNN…NNNN and SSSQQPPHIQQPHSQQIPS. Positions 460 to 472 are enriched in polar residues; the sequence is NSTSQESMQISPS. Over residues 528–589 the composition is skewed to low complexity; the sequence is QALQQHHQQQ…SSTSTSPQLS (62 aa). Polar residues predominate over residues 600-625; the sequence is GSMTASTNPATSPTMSHRGKTSSPIE.

This sequence belongs to the protein kinase superfamily. CAMK Ser/Thr protein kinase family.

It carries out the reaction L-seryl-[protein] + ATP = O-phospho-L-seryl-[protein] + ADP + H(+). The catalysed reaction is L-threonyl-[protein] + ATP = O-phospho-L-threonyl-[protein] + ADP + H(+). This Dictyostelium discoideum (Social amoeba) protein is Probable serine/threonine-protein kinase DDB_G0277165.